A 68-amino-acid polypeptide reads, in one-letter code: Antimicrobial peptide UyCT5 (68 aa).

An N-terminal signal peptide occupies residues 1–23; the sequence is MKNQFAILLLAVVFLQLISQSDA. Leucine amide is present on Leu-36. Residues 40-68 constitute a propeptide that is removed on maturation; the sequence is GLKNADRLDELFDGDISDADLDFLRELMR.

It belongs to the non-disulfide-bridged peptide (NDBP) superfamily. Short antimicrobial peptide (group 4) family. In terms of tissue distribution, expressed by the venom gland.

The protein localises to the secreted. It localises to the target cell membrane. Its function is as follows. Antimicrobial peptide that inhibits the growth of Gram-positive (S.aureus, MIC=1 uM) and Gram-negative bacteria (E.coli, MIC=15 uM and P.aeruginosa, MIC=2 uM). It also shows 37% of hemolysis when 15 uM are tested (93% at 50 uM). This chain is Antimicrobial peptide UyCT5, found in Urodacus yaschenkoi (Inland robust scorpion).